A 468-amino-acid polypeptide reads, in one-letter code: MSRQQIGVVGMAVMGRNLALNIESKNYSVSIFNRTRSVTEEVFNQNKKKNIVPYFSIKDFIDSLLKPRCILLMVQSGKATDETIKMILPYLEKEDILIDAGNTFYKDTIRRNEKLSKYEINFIGMGVSGGELGALNGPSIMPGGQKEAYKLVLPMLEKISAKFKGEPCVSYIGPNGAGHYVKMVHNGIEYGDMQLISESYFLLKYLLNMSNEELSSTFSKWNKGELNSYLIEITKNIFIEKDEKGKYLIDRILDVAEDKGTGKWISKSALDLREPLSLITESVFARYLSSLKRQRIIASKILQGPKIKTFIKDKNSFIEEVRRALYLGKIISYAQGFSQLKRASEKYHWNLKYGEIAKIFRAGCIIRANFLQKITDEYTQNKNVVNLLLTPYFSKIANEYENSLRNIVMYAIKYGISTPTFSAAISYYDSYRALYLPANLIQAQRDYFGSHTYQRTDQTGYFHTNWSQ.

Residues 10–15 (GMAVMG), 33–35 (NRT), 74–76 (VQS), and asparagine 102 contribute to the NADP(+) site. Substrate-binding positions include asparagine 102 and 128–130 (SGG). Lysine 182 functions as the Proton acceptor in the catalytic mechanism. 185 to 186 (HN) contributes to the substrate binding site. Glutamate 189 functions as the Proton donor in the catalytic mechanism. Substrate-binding residues include tyrosine 190, lysine 259, arginine 286, arginine 445, and histidine 451.

It belongs to the 6-phosphogluconate dehydrogenase family. In terms of assembly, homodimer.

The enzyme catalyses 6-phospho-D-gluconate + NADP(+) = D-ribulose 5-phosphate + CO2 + NADPH. Its pathway is carbohydrate degradation; pentose phosphate pathway; D-ribulose 5-phosphate from D-glucose 6-phosphate (oxidative stage): step 3/3. Catalyzes the oxidative decarboxylation of 6-phosphogluconate to ribulose 5-phosphate and CO(2), with concomitant reduction of NADP to NADPH. This chain is 6-phosphogluconate dehydrogenase, decarboxylating (gnd), found in Buchnera aphidicola subsp. Acyrthosiphon pisum (strain APS) (Acyrthosiphon pisum symbiotic bacterium).